Reading from the N-terminus, the 104-residue chain is Large ribosomal subunit protein uL24 (104 aa).

Belongs to the universal ribosomal protein uL24 family. Part of the 50S ribosomal subunit.

In terms of biological role, one of two assembly initiator proteins, it binds directly to the 5'-end of the 23S rRNA, where it nucleates assembly of the 50S subunit. One of the proteins that surrounds the polypeptide exit tunnel on the outside of the subunit. This chain is Large ribosomal subunit protein uL24, found in Pseudomonas aeruginosa (strain LESB58).